The chain runs to 372 residues: MNTGLDLEVSFNHLLQDMGLSSTISHLLWLPLPMLLVLTAALIGVLVTVWLERKISAAAQQRIGPEYAGALGILQPMADGLKLLVKEDIIPDKADNLLFTLGPVLVLIPVILSWLIIPFGQNLLISNVGIGIFLWIALSSIQPIGLLMSGYASNNKYSLLGGLRAAAQSISYEIPLALAVLAIVMMSNSLSTIDIVNQQNTLGFLSWNIWRQPVGFLIFWICALAECERLPFDLPEAEEELVAGYQTEYAGMKFALFYLGSYINLVLSSLLVSVLYLGGWGFPIPVELIANTLHQSINSPVIQIITASLGIVMTVFKTYLLVFLAILLRWTTPRVRIDQLLDLGWKFLLPISLVNLLFTAALKLVFPFAFGG.

A run of 8 helical transmembrane segments spans residues 27 to 47 (LLWL…GVLV), 97 to 117 (LLFT…WLII), 128 to 148 (VGIG…GLLM), 176 to 196 (LALA…IDIV), 204 to 224 (FLSW…ICAL), 270 to 290 (LLVS…ELIA), 308 to 328 (SLGI…AILL), and 351 to 371 (ISLV…FAFG).

This sequence belongs to the complex I subunit 1 family. NDH-1 is composed of at least 11 different subunits.

It is found in the cellular thylakoid membrane. The enzyme catalyses a plastoquinone + NADH + (n+1) H(+)(in) = a plastoquinol + NAD(+) + n H(+)(out). It carries out the reaction a plastoquinone + NADPH + (n+1) H(+)(in) = a plastoquinol + NADP(+) + n H(+)(out). Functionally, NDH-1 shuttles electrons from an unknown electron donor, via FMN and iron-sulfur (Fe-S) centers, to quinones in the respiratory and/or the photosynthetic chain. The immediate electron acceptor for the enzyme in this species is believed to be plastoquinone. Couples the redox reaction to proton translocation, and thus conserves the redox energy in a proton gradient. The polypeptide is NAD(P)H-quinone oxidoreductase subunit 1 (Prochlorococcus marinus (strain SARG / CCMP1375 / SS120)).